We begin with the raw amino-acid sequence, 288 residues long: Acetyl-coenzyme A carboxylase carboxyl transferase subunit beta (288 aa).

The region spanning 32–288 (LFAKCPACKH…LELHTEVENV (257 aa)) is the CoA carboxyltransferase N-terminal domain. Cys-36, Cys-39, Cys-54, and Cys-57 together coordinate Zn(2+). The C4-type zinc finger occupies 36-57 (CPACKHTIYQKDLGKNKVCPNC).

The protein belongs to the AccD/PCCB family. In terms of assembly, acetyl-CoA carboxylase is a heterohexamer composed of biotin carboxyl carrier protein (AccB), biotin carboxylase (AccC) and two subunits each of ACCase subunit alpha (AccA) and ACCase subunit beta (AccD). Zn(2+) serves as cofactor.

It is found in the cytoplasm. The enzyme catalyses N(6)-carboxybiotinyl-L-lysyl-[protein] + acetyl-CoA = N(6)-biotinyl-L-lysyl-[protein] + malonyl-CoA. The protein operates within lipid metabolism; malonyl-CoA biosynthesis; malonyl-CoA from acetyl-CoA: step 1/1. In terms of biological role, component of the acetyl coenzyme A carboxylase (ACC) complex. Biotin carboxylase (BC) catalyzes the carboxylation of biotin on its carrier protein (BCCP) and then the CO(2) group is transferred by the transcarboxylase to acetyl-CoA to form malonyl-CoA. The sequence is that of Acetyl-coenzyme A carboxylase carboxyl transferase subunit beta from Lactococcus lactis subsp. cremoris (strain SK11).